A 373-amino-acid chain; its full sequence is NAD-dependent protein deacetylase SIR2rp1 (373 aa).

The Deacetylase sirtuin-type domain occupies 12 to 349 (HALGEPTVEG…LKLAECLGLR (338 aa)). Residues 39-59 (GAGA…TGIY) and 124-127 (QNID) each bind NAD(+). Residue histidine 144 is the Proton acceptor of the active site. The Zn(2+) site is built by cysteine 152, cysteine 155, cysteine 176, and cysteine 179. Residues 216-218 (GTS) and 241-243 (NRE) contribute to the NAD(+) site. Positions 263–313 (DAVAKEGRSSSSQSRSPSASARREEGGTEDGSSSPNEEVEDASTSSSSDGY) are disordered. The segment covering 271–282 (SSSSQSRSPSAS) has biased composition (low complexity). Cysteine 335 is an NAD(+) binding site.

The protein belongs to the sirtuin family. Class I subfamily. Zn(2+) is required as a cofactor.

Its subcellular location is the nucleus. The enzyme catalyses N(6)-acetyl-L-lysyl-[protein] + NAD(+) + H2O = 2''-O-acetyl-ADP-D-ribose + nicotinamide + L-lysyl-[protein]. NAD-dependent deacetylase, which probably acts as a regulator of gene expression believed to help form modified chromatin structures on the genes it regulates. This chain is NAD-dependent protein deacetylase SIR2rp1 (SIR2rp1), found in Leishmania major.